The primary structure comprises 472 residues: Chromosomal replication initiator protein DnaA (472 aa).

The tract at residues 1–73 (MSNMEHDRWS…LTCWQAEMPE (73 aa)) is domain I, interacts with DnaA modulators. Residues 73–128 (EVCRIDLTVRSPMRAAVTKEAPAPAEHRRDEHRPAADARSHAAAPAPSNHDALGGS) are domain II. The tract at residues 89-127 (VTKEAPAPAEHRRDEHRPAADARSHAAAPAPSNHDALGG) is disordered. Residues 97-112 (AEHRRDEHRPAADARS) show a composition bias toward basic and acidic residues. Low complexity predominate over residues 113–124 (HAAAPAPSNHDA). A domain III, AAA+ region region spans residues 129–351 (PLDPRLTFAS…GAINRLLAHS (223 aa)). 4 residues coordinate ATP: Gly176, Gly178, Lys179, and Thr180. Positions 352–472 (KLNAQPVTLE…VESLKRQLQE (121 aa)) are domain IV, binds dsDNA.

Belongs to the DnaA family. In terms of assembly, oligomerizes as a right-handed, spiral filament on DNA at oriC.

Its subcellular location is the cytoplasm. Its function is as follows. Plays an essential role in the initiation and regulation of chromosomal replication. ATP-DnaA binds to the origin of replication (oriC) to initiate formation of the DNA replication initiation complex once per cell cycle. Binds the DnaA box (a 9 base pair repeat at the origin) and separates the double-stranded (ds)DNA. Forms a right-handed helical filament on oriC DNA; dsDNA binds to the exterior of the filament while single-stranded (ss)DNA is stabiized in the filament's interior. The ATP-DnaA-oriC complex binds and stabilizes one strand of the AT-rich DNA unwinding element (DUE), permitting loading of DNA polymerase. After initiation quickly degrades to an ADP-DnaA complex that is not apt for DNA replication. Binds acidic phospholipids. The chain is Chromosomal replication initiator protein DnaA from Rhodopseudomonas palustris (strain BisB5).